Here is a 171-residue protein sequence, read N- to C-terminus: RNA pyrophosphohydrolase (171 aa).

Residues 6-149 form the Nudix hydrolase domain; sequence GFRPNVGIIL…KREVYRRALK (144 aa). The Nudix box signature appears at 39 to 60; sequence GGIKESESAEQALYRELQEEVG.

It belongs to the Nudix hydrolase family. RppH subfamily. It depends on a divalent metal cation as a cofactor.

Accelerates the degradation of transcripts by removing pyrophosphate from the 5'-end of triphosphorylated RNA, leading to a more labile monophosphorylated state that can stimulate subsequent ribonuclease cleavage. This Teredinibacter turnerae (strain ATCC 39867 / T7901) protein is RNA pyrophosphohydrolase.